A 1229-amino-acid polypeptide reads, in one-letter code: Receptor-type adenylate cyclase GRESAG 4.3 (1229 aa).

Topologically, residues 1 to 24 are cytoplasmic; that stretch reads MIARVCRLTKHSKPPHLPITLTTP. A helical membrane pass occupies residues 25 to 45; it reads TLFLVVLVLLQLHPICVLVNV. Residues 46–845 are Extracellular-facing; that stretch reads DDGGGVTVKA…PNGNALTPAQ (800 aa). Asn77, Asn84, Asn626, Asn693, and Asn768 each carry an N-linked (GlcNAc...) asparagine glycan. A helical transmembrane segment spans residues 846 to 866; it reads LAGVVGGSLFVVALAICLSVL. At 867 to 1229 the chain is on the cytoplasmic side; that stretch reads ACFTLRGTRD…SNDLSDMIRV (363 aa). A Guanylate cyclase domain is found at 889 to 1043; the sequence is TLIFTDIESS…RTSNMAARTE (155 aa). The Mg(2+) site is built by Asp894 and Asp937.

Belongs to the adenylyl cyclase class-3 family. Mg(2+) is required as a cofactor.

The protein localises to the membrane. It carries out the reaction ATP = 3',5'-cyclic AMP + diphosphate. Its function is as follows. Could act as a receptor for an unknown ligand. The polypeptide is Receptor-type adenylate cyclase GRESAG 4.3 (GRESAG 4.3) (Trypanosoma brucei brucei).